Reading from the N-terminus, the 859-residue chain is Bifunctional heparan sulfate N-deacetylase/N-sulfotransferase 1 (859 aa).

Topologically, residues 1 to 13 (MIITPYLNPRLVK) are cytoplasmic. A helical; Signal-anchor for type II membrane protein membrane pass occupies residues 14-34 (PLKWLAIIILLYFLYFSLFSI). The heparan sulfate N-deacetylase 1 stretch occupies residues 34–575 (INKKPGKPRK…PRHQAILPPS (542 aa)). The Lumenal segment spans residues 35-859 (NKKPGKPRKP…WLEEAVRIRV (825 aa)). N-linked (GlcNAc...) asparagine glycosylation is found at N50, N74, N210, N262, N378, and N429. The heparan sulfate N-sulfotransferase 1 stretch occupies residues 576 to 859 (MSCSKKSLPD…WLEEAVRIRV (284 aa)). K593 functions as the For sulfotransferase activity in the catalytic mechanism. Residue 593–597 (KTGST) participates in 3'-phosphoadenylyl sulfate binding. N-linked (GlcNAc...) asparagine glycans are attached at residues N608 and N643. S687 contacts 3'-phosphoadenylyl sulfate. N-linked (GlcNAc...) asparagine glycosylation is present at N715. C796 and C805 are joined by a disulfide. 810–814 (KGRKY) provides a ligand contact to 3'-phosphoadenylyl sulfate.

This sequence belongs to the sulfotransferase 1 family. NDST subfamily. As to quaternary structure, monomer.

Its subcellular location is the golgi apparatus membrane. The catalysed reaction is alpha-D-glucosaminyl-[heparan sulfate](n) + 3'-phosphoadenylyl sulfate = N-sulfo-alpha-D-glucosaminyl-[heparan sulfate](n) + adenosine 3',5'-bisphosphate + 2 H(+). It participates in glycan metabolism; heparan sulfate biosynthesis. The protein operates within glycan metabolism; heparin biosynthesis. Functionally, essential bifunctional enzyme that catalyzes both the N-deacetylation and the N-sulfation of glucosamine (GlcNAc) of the glycosaminoglycan in heparan sulfate. Modifies the GlcNAc-GlcA disaccharide repeating sugar backbone to make N-sulfated heparosan, a prerequisite substrate for later modifications in heparin biosynthesis. The chain is Bifunctional heparan sulfate N-deacetylase/N-sulfotransferase 1 (hst-1) from Caenorhabditis briggsae.